Consider the following 80-residue polypeptide: UPF0291 protein YlaC (80 aa).

This sequence belongs to the UPF0291 family.

Its subcellular location is the cytoplasm. The polypeptide is UPF0291 protein YlaC (ylcA) (Lactococcus lactis subsp. lactis (strain IL1403) (Streptococcus lactis)).